A 274-amino-acid chain; its full sequence is MAVIKCKPTSPGRRHVVKVVNTDLHKGKPFAGLLAKKSKSGGRNNTGRITVRHVGGGHKQHYRLIDFKRDKDGIPAKIERLEYDPNRTANIALVLYADGERRYILAAKGMQAGDKIQSGVAAEIKTGNAMPLRNIPVGSVVHAVEMKPGKGAQIARSAGAYVQVVARDGAYATLRLRSGEMRKVPVDCRATFGEVGNAEHMLRQLGKAGAKRWRGIRPTVRGVAMNPVDHPHGGGEGRTSGGRHPVTPWGVPTKGYKTRSNKRTDKYIVRRRNK.

The tract at residues 223 to 274 (VAMNPVDHPHGGGEGRTSGGRHPVTPWGVPTKGYKTRSNKRTDKYIVRRRNK) is disordered.

It belongs to the universal ribosomal protein uL2 family. In terms of assembly, part of the 50S ribosomal subunit. Forms a bridge to the 30S subunit in the 70S ribosome.

Functionally, one of the primary rRNA binding proteins. Required for association of the 30S and 50S subunits to form the 70S ribosome, for tRNA binding and peptide bond formation. It has been suggested to have peptidyltransferase activity; this is somewhat controversial. Makes several contacts with the 16S rRNA in the 70S ribosome. The sequence is that of Large ribosomal subunit protein uL2 from Shewanella baltica (strain OS223).